A 300-amino-acid chain; its full sequence is Protein TRACHEARY ELEMENT DIFFERENTIATION-RELATED 7A (300 aa).

The interval 1–181 is disordered; the sequence is MASPLSQSVF…HIIPPPPPSP (181 aa). Residues 1-187 lie on the Extracellular side of the membrane; sequence MASPLSQSVF…PPSPSNHSTT (187 aa). The span at 12–181 shows a compositional bias: pro residues; it reads HFPPPSPAAT…HIIPPPPPSP (170 aa). An N-linked (GlcNAc...) asparagine glycan is attached at Asn183. A helical membrane pass occupies residues 188–208; sequence IVVIFVSCGGVFFLAFAMAAL. At 209 to 300 the chain is on the cytoplasmic side; sequence WCFLKKKKKK…SSFGHHYLHG (92 aa).

In terms of tissue distribution, accumulates in cells differentiating into tracheary element (TE) which undergo secondary cell wall (SCW) formation.

Its subcellular location is the cell membrane. It is found in the secreted. The protein localises to the cell wall. Its function is as follows. Involved in the secondary cell wall (SCW) formation of vessel elements (e.g. protoxylem and metaxylem), thus promoting tracheary element (TE) differentiation. This Zinnia elegans (Garden zinnia) protein is Protein TRACHEARY ELEMENT DIFFERENTIATION-RELATED 7A.